An 82-amino-acid chain; its full sequence is Conotoxin C11GB (82 aa).

A signal peptide spans Met1–Ala22. Positions Glu23 to Asp53 are excised as a propeptide. Intrachain disulfides connect Cys55-Cys72, Cys62-Cys76, and Cys71-Cys80.

This sequence belongs to the conotoxin O1 superfamily. Expressed by the venom duct.

The protein resides in the secreted. This Conus vexillum (Flag cone) protein is Conotoxin C11GB.